Reading from the N-terminus, the 87-residue chain is UPF0250 protein YPK_3025 (87 aa).

Belongs to the UPF0250 family.

The sequence is that of UPF0250 protein YPK_3025 from Yersinia pseudotuberculosis serotype O:3 (strain YPIII).